The following is a 453-amino-acid chain: Formimidoylglutamate deiminase (453 aa).

Residues histidine 56 and histidine 58 each contribute to the Zn(2+) site. N-formimidoyl-L-glutamate is bound by residues glutamine 61, arginine 82, tyrosine 121, histidine 206, and arginine 209. Position 232 (histidine 232) interacts with Zn(2+). Glutamate 235 contributes to the N-formimidoyl-L-glutamate binding site. Residues histidine 269 and aspartate 320 each act as proton acceptor in the active site. Zn(2+) is bound at residue aspartate 320.

It belongs to the metallo-dependent hydrolases superfamily. Homodimer. Requires Zn(2+) as cofactor.

It carries out the reaction N-formimidoyl-L-glutamate + H2O = N-formyl-L-glutamate + NH4(+). The protein operates within amino-acid degradation; L-histidine degradation into L-glutamate; L-glutamate from N-formimidoyl-L-glutamate (deiminase route): step 1/2. Its activity is regulated as follows. Inhibited by the metal chelator dipicolinate. Inhibited by N-formimino-L-aspartate and N-guanidino-L-glutaric acid. Its function is as follows. Catalyzes the hydrolysis of N-formimino-L-glutamate to N-formyl-L-glutamate and ammonia. This Pseudomonas aeruginosa (strain ATCC 15692 / DSM 22644 / CIP 104116 / JCM 14847 / LMG 12228 / 1C / PRS 101 / PAO1) protein is Formimidoylglutamate deiminase.